The sequence spans 242 residues: Type III pantothenate kinase (242 aa).

Residue 7–14 coordinates ATP; sequence DLGNSRFK. Substrate-binding positions include tyrosine 91 and 98-101; that span reads GVDR. The active-site Proton acceptor is the aspartate 100. Threonine 121 serves as a coordination point for ATP. Position 171 (threonine 171) interacts with substrate.

This sequence belongs to the type III pantothenate kinase family. Homodimer. It depends on NH4(+) as a cofactor. K(+) is required as a cofactor.

It is found in the cytoplasm. It carries out the reaction (R)-pantothenate + ATP = (R)-4'-phosphopantothenate + ADP + H(+). It participates in cofactor biosynthesis; coenzyme A biosynthesis; CoA from (R)-pantothenate: step 1/5. In terms of biological role, catalyzes the phosphorylation of pantothenate (Pan), the first step in CoA biosynthesis. In Xanthomonas campestris pv. campestris (strain B100), this protein is Type III pantothenate kinase.